Here is a 176-residue protein sequence, read N- to C-terminus: Nucleoside triphosphate/diphosphate phosphatase (176 aa).

Arg23 functions as the Proton donor in the catalytic mechanism. Mg(2+) contacts are provided by Asn87, Asp103, Asp105, Asp107, Asp120, and Glu123.

This sequence belongs to the Ntdp family. Mg(2+) serves as cofactor.

The catalysed reaction is a ribonucleoside 5'-triphosphate + H2O = a ribonucleoside 5'-diphosphate + phosphate + H(+). It carries out the reaction a ribonucleoside 5'-diphosphate + H2O = a ribonucleoside 5'-phosphate + phosphate + H(+). Its function is as follows. Has nucleoside phosphatase activity towards nucleoside triphosphates and nucleoside diphosphates. The polypeptide is Nucleoside triphosphate/diphosphate phosphatase (Lactococcus lactis subsp. cremoris (strain MG1363)).